We begin with the raw amino-acid sequence, 360 residues long: S-adenosylmethionine:tRNA ribosyltransferase-isomerase (360 aa).

Belongs to the QueA family. In terms of assembly, monomer.

It localises to the cytoplasm. It catalyses the reaction 7-aminomethyl-7-carbaguanosine(34) in tRNA + S-adenosyl-L-methionine = epoxyqueuosine(34) in tRNA + adenine + L-methionine + 2 H(+). The protein operates within tRNA modification; tRNA-queuosine biosynthesis. Transfers and isomerizes the ribose moiety from AdoMet to the 7-aminomethyl group of 7-deazaguanine (preQ1-tRNA) to give epoxyqueuosine (oQ-tRNA). This is S-adenosylmethionine:tRNA ribosyltransferase-isomerase from Rhizobium meliloti (strain 1021) (Ensifer meliloti).